Here is a 204-residue protein sequence, read N- to C-terminus: Thymidylate kinase (204 aa).

Glycine 11–serine 18 contributes to the ATP binding site.

Belongs to the thymidylate kinase family.

The enzyme catalyses dTMP + ATP = dTDP + ADP. Its function is as follows. Phosphorylation of dTMP to form dTDP in both de novo and salvage pathways of dTTP synthesis. This chain is Thymidylate kinase, found in Janthinobacterium sp. (strain Marseille) (Minibacterium massiliensis).